A 138-amino-acid polypeptide reads, in one-letter code: Large ribosomal subunit protein uL16 (138 aa).

Belongs to the universal ribosomal protein uL16 family. Part of the 50S ribosomal subunit.

Functionally, binds 23S rRNA and is also seen to make contacts with the A and possibly P site tRNAs. This Anaeromyxobacter sp. (strain Fw109-5) protein is Large ribosomal subunit protein uL16.